Consider the following 97-residue polypeptide: Type VII secretion system extracellular protein A (97 aa).

Residues 61-93 are a coiled coil; the sequence is KVEKFAQLLEEIKQQLNSTADAVQEQDQQLSNN.

This sequence belongs to the WXG100 family. sagEsxA-like subfamily. In terms of assembly, forms both homodimers and heterodimers with EsxC.

Its subcellular location is the secreted. Its function is as follows. Virulence factor that is important for the establishment of infection in the host. EsxA is required for EsxB synthesis as well as secretion. Modulates host cell apoptotic pathways and mediates together with EsxB the release of S.aureus from the host cell. By acting on apoptosis, plays a role in the modulation of dendritic cell-mediated immunity. The sequence is that of Type VII secretion system extracellular protein A from Staphylococcus aureus (strain USA300).